Here is a 446-residue protein sequence, read N- to C-terminus: Bifunctional protein GlmU (446 aa).

The segment at 1–226 (MLAIAILAAG…PFEIKGINDR (226 aa)) is pyrophosphorylase. Residues 7 to 10 (LAAG), K21, Q73, and 78 to 79 (GT) each bind UDP-N-acetyl-alpha-D-glucosamine. A Mg(2+)-binding site is contributed by D103. Positions 140, 155, 170, and 224 each coordinate UDP-N-acetyl-alpha-D-glucosamine. Position 224 (N224) interacts with Mg(2+). The tract at residues 227–247 (VQLSECEHYIQEELKSLWMSK) is linker. The tract at residues 248-446 (GVSFVDPISC…SKAIIRTKAD (199 aa)) is N-acetyltransferase. The UDP-N-acetyl-alpha-D-glucosamine site is built by R329 and K347. H359 serves as the catalytic Proton acceptor. The UDP-N-acetyl-alpha-D-glucosamine site is built by Y362 and N373. Acetyl-CoA-binding residues include A376, A419, and R436.

In the N-terminal section; belongs to the N-acetylglucosamine-1-phosphate uridyltransferase family. The protein in the C-terminal section; belongs to the transferase hexapeptide repeat family. Homotrimer. Mg(2+) serves as cofactor.

It localises to the cytoplasm. It catalyses the reaction alpha-D-glucosamine 1-phosphate + acetyl-CoA = N-acetyl-alpha-D-glucosamine 1-phosphate + CoA + H(+). The catalysed reaction is N-acetyl-alpha-D-glucosamine 1-phosphate + UTP + H(+) = UDP-N-acetyl-alpha-D-glucosamine + diphosphate. Its pathway is nucleotide-sugar biosynthesis; UDP-N-acetyl-alpha-D-glucosamine biosynthesis; N-acetyl-alpha-D-glucosamine 1-phosphate from alpha-D-glucosamine 6-phosphate (route II): step 2/2. The protein operates within nucleotide-sugar biosynthesis; UDP-N-acetyl-alpha-D-glucosamine biosynthesis; UDP-N-acetyl-alpha-D-glucosamine from N-acetyl-alpha-D-glucosamine 1-phosphate: step 1/1. It functions in the pathway bacterial outer membrane biogenesis; LPS lipid A biosynthesis. Functionally, catalyzes the last two sequential reactions in the de novo biosynthetic pathway for UDP-N-acetylglucosamine (UDP-GlcNAc). The C-terminal domain catalyzes the transfer of acetyl group from acetyl coenzyme A to glucosamine-1-phosphate (GlcN-1-P) to produce N-acetylglucosamine-1-phosphate (GlcNAc-1-P), which is converted into UDP-GlcNAc by the transfer of uridine 5-monophosphate (from uridine 5-triphosphate), a reaction catalyzed by the N-terminal domain. This is Bifunctional protein GlmU from Prochlorococcus marinus (strain NATL2A).